The sequence spans 328 residues: DNA-directed RNA polymerase subunit alpha (328 aa).

The segment at 1 to 232 (MSTQGFLKPR…DQISVFAALE (232 aa)) is alpha N-terminal domain (alpha-NTD). The alpha C-terminal domain (alpha-CTD) stretch occupies residues 248-328 (IDPVLLRPVD…NWPPLGLERP (81 aa)).

The protein belongs to the RNA polymerase alpha chain family. As to quaternary structure, homodimer. The RNAP catalytic core consists of 2 alpha, 1 beta, 1 beta' and 1 omega subunit. When a sigma factor is associated with the core the holoenzyme is formed, which can initiate transcription.

The enzyme catalyses RNA(n) + a ribonucleoside 5'-triphosphate = RNA(n+1) + diphosphate. In terms of biological role, DNA-dependent RNA polymerase catalyzes the transcription of DNA into RNA using the four ribonucleoside triphosphates as substrates. The chain is DNA-directed RNA polymerase subunit alpha from Bordetella avium (strain 197N).